Reading from the N-terminus, the 20-residue chain is 7.2 kDa cytotoxin RVV-7 (20 aa).

As to quaternary structure, monomer. Homodimerizes during storage at 30 degrees Celsius (observed after 3 days). Expressed by the venom gland.

The protein localises to the secreted. The protein resides in the target cell membrane. This three-finger cytotoxin shows cytotoxicity and direct nephrotoxicity. The cytotoxicity has been observed on B16F10 melanoma cells (EC(50)=2.56 uM) and on kidney proximal tubular epithelium LLCPK1 cells (EC(50)=4.79 uM); it is due to necrotic cell death and not to apoptosis. Direct nephrotoxicity has been deduced from binding to LLCPK1 cell line and to kidney membranes. In addition, after intravenous injection into mice tail vein, the toxin principally accumulates in kidney, but only minimally in blood, liver and brain. The polypeptide is 7.2 kDa cytotoxin RVV-7 (Daboia russelii (Russel's viper)).